Consider the following 117-residue polypeptide: MAEQISSARAEARTVRIAPRKARLVVDLIRGKSVAEALAILKFTPKAASPIVEKVLRSAVANAEHNYDLESANLYVSEAYVNEGATLKRFRPRAKGSASPIMKRTSHVVVVVSELND.

The protein belongs to the universal ribosomal protein uL22 family. As to quaternary structure, part of the 50S ribosomal subunit.

This protein binds specifically to 23S rRNA; its binding is stimulated by other ribosomal proteins, e.g. L4, L17, and L20. It is important during the early stages of 50S assembly. It makes multiple contacts with different domains of the 23S rRNA in the assembled 50S subunit and ribosome. In terms of biological role, the globular domain of the protein is located near the polypeptide exit tunnel on the outside of the subunit, while an extended beta-hairpin is found that lines the wall of the exit tunnel in the center of the 70S ribosome. This chain is Large ribosomal subunit protein uL22, found in Lactobacillus delbrueckii subsp. bulgaricus (strain ATCC 11842 / DSM 20081 / BCRC 10696 / JCM 1002 / NBRC 13953 / NCIMB 11778 / NCTC 12712 / WDCM 00102 / Lb 14).